The chain runs to 368 residues: Polymerase delta-interacting protein 2 (368 aa).

Residues 1–21 (MAGCVARRALAVGSRWWSRSL) constitute a mitochondrion transit peptide. One can recognise an ApaG domain in the interval 235–360 (RETTENIRVT…FSLESNKDEK (126 aa)). Position 292 is a phosphothreonine (Thr-292).

Interacts with PCNA and POLD2. Interacts with SSBP1. Interacts with PRIMPOL; leading to enhance DNA polymerase activity of PRIMPOL. Interacts with POLH. Interacts with POLD1; leading to stimulate DNA polymerase activity of POLD1.

The protein resides in the mitochondrion matrix. The protein localises to the nucleus. Its function is as follows. Involved in DNA damage tolerance by regulating translesion synthesis (TLS) of templates carrying DNA damage lesions such as 8oxoG and abasic sites. May act by stimulating activity of DNA polymerases involved in TLS, such as PRIMPOL and polymerase delta (POLD1). This Mus musculus (Mouse) protein is Polymerase delta-interacting protein 2.